We begin with the raw amino-acid sequence, 125 residues long: Cytochrome c-556 (125 aa).

M13, C113, C116, and H117 together coordinate heme. 4 residues coordinate heme c: M13, C113, C116, and H117.

In terms of assembly, monomer. Binds 1 heme c group covalently per subunit.

Functionally, low-spin monoheme cytochrome c. This chain is Cytochrome c-556, found in Agrobacterium tumefaciens (strain apple 185).